Here is a 492-residue protein sequence, read N- to C-terminus: Catalase (492 aa).

Residues histidine 65 and asparagine 138 contribute to the active site. Heme is bound at residue tyrosine 348.

This sequence belongs to the catalase family. In terms of assembly, homotetramer. Heme serves as cofactor.

It is found in the cytoplasm. It localises to the cytosol. The protein localises to the peroxisome matrix. It carries out the reaction 2 H2O2 = O2 + 2 H2O. Catalyzes the degradation of hydrogen peroxide (H(2)O(2)) generated by peroxisomal oxidases to water and oxygen, thereby protecting cells from the toxic effects of hydrogen peroxide. The chain is Catalase from Helianthus annuus (Common sunflower).